We begin with the raw amino-acid sequence, 192 residues long: GTP cyclohydrolase 1 (192 aa).

Zn(2+)-binding residues include Cys82, His85, and Cys153.

It belongs to the GTP cyclohydrolase I family. As to quaternary structure, toroid-shaped homodecamer, composed of two pentamers of five dimers.

It carries out the reaction GTP + H2O = 7,8-dihydroneopterin 3'-triphosphate + formate + H(+). Its pathway is cofactor biosynthesis; 7,8-dihydroneopterin triphosphate biosynthesis; 7,8-dihydroneopterin triphosphate from GTP: step 1/1. This chain is GTP cyclohydrolase 1, found in Rickettsia bellii (strain OSU 85-389).